Consider the following 289-residue polypeptide: Phosphatidylglycerol--prolipoprotein diacylglyceryl transferase (289 aa).

A run of 4 helical transmembrane segments spans residues Phe18–Ala38, Asp54–Phe74, Val86–Thr106, and Leu116–Gly136. Residue Arg137 coordinates a 1,2-diacyl-sn-glycero-3-phospho-(1'-sn-glycerol). The next 3 helical transmembrane spans lie at His177–Leu197, Gly205–Met225, and Leu236–Tyr256.

It belongs to the Lgt family.

The protein resides in the cell membrane. The enzyme catalyses L-cysteinyl-[prolipoprotein] + a 1,2-diacyl-sn-glycero-3-phospho-(1'-sn-glycerol) = an S-1,2-diacyl-sn-glyceryl-L-cysteinyl-[prolipoprotein] + sn-glycerol 1-phosphate + H(+). It functions in the pathway protein modification; lipoprotein biosynthesis (diacylglyceryl transfer). Catalyzes the transfer of the diacylglyceryl group from phosphatidylglycerol to the sulfhydryl group of the N-terminal cysteine of a prolipoprotein, the first step in the formation of mature lipoproteins. The protein is Phosphatidylglycerol--prolipoprotein diacylglyceryl transferase of Halalkalibacterium halodurans (strain ATCC BAA-125 / DSM 18197 / FERM 7344 / JCM 9153 / C-125) (Bacillus halodurans).